The following is a 263-amino-acid chain: MPSAAVSVPEVPSSDRKTVYLVTGASRGLGRGLVQAFLLRPNSIVIAGLRNRTSQAGALDALPRGENSSLIAVQLDSGSKSDPADAVSILQRDYGITHLDVVIANAAIAANYGPASTMPLEYLETHMQINAYAALLLFQATRVLLQAAKSPQFICVGAPISTITEMESCARAPLTNYALSKLAACYLVRKIHFENKWLVAYIVDPGHIQSDMGAQAARLFGRKEAPTTIEESVAGICARMTEADKNTTSGRFILFSDGSDVPW.

NADP(+) is bound by residues leucine 29, aspartate 76, asparagine 105, tyrosine 177, lysine 181, isoleucine 208, and serine 210. Tyrosine 177 (proton donor) is an active-site residue. Residue lysine 181 is the Lowers pKa of active site Tyr of the active site.

It belongs to the short-chain dehydrogenases/reductases (SDR) family.

The enzyme catalyses (1'S)-averantin + NADP(+) = norsolorinic acid + NADPH + H(+). It functions in the pathway mycotoxin biosynthesis; sterigmatocystin biosynthesis. Its function is as follows. Short chain dehydrogenase; part of the gene cluster that mediates the biosynthesis of sterigmatocystin (ST), a polyketide-derived furanocoumarin which is part of the most toxic and carcinogenic compounds among the known mycotoxins. The first step in the biosynthesis of sterigmatocystin is the production of hexanoate by the fatty acid synthase (FAS) units stcJ and stcK. The polyketide backbone is assembled by the non-reducing polyketide synthase stcA by condensation of the starter hexanoyl-CoA and 7 malonyl-CoA extender units followed by cyclization and release of norsolorinic acid. Norsolorinic acid is the first stable intermediate in the biosynthesis of sterigmatocystin and is converted into averantin (AVN) by the ketoreductase stcE which reduces the hexanoate ketone to an alcohol. Averantin is then oxidized into 5'-hydroxyaverantin (HAVN) by the cytochrome P450 monooxygenase stcF. 5'-hydroxyaverantin is further converted to 5'-oxyaverantin (OAVN) by the 5'-hydroxyaverantin dehydrogenase stcG. The next step is the conversion of OAVN into averufin (AVF) which is catalyzed by a yet to be identified enzyme. The cytochrome P450 monooxygenase stcB and the flavin-binding monooxygenase stcW are both required for the conversion of averufin to 1-hydroxyversicolorone. The esterase stcI probably catalyzes the formation of versiconal hemiacetal acetate from 1-hydroxyversicolorone. The oxydoreductase stcN then probably catalyzes the biosynthetic step from versiconal to versicolorin B (VERB). The next step is performed by the versicolorin B desaturase stcL to produce versicolorin A (VERA). The ketoreductase stcU and the cytochrome P450 monooxygenase stcS are involved in the conversion of versicolorin A to demethylsterigmatocystin. The Baeyer-Villiger oxidas stcQ and the reductase stcR might be involved in the biosynthetic step from versicolorin A to demethylsterigmatocystin. The final step in the biosynthesis of sterigmatocystin is the methylation of demethylsterigmatocystin catalyzed by the methyltransferase stcP. This is Norsolorinic acid ketoreductase stcE from Emericella nidulans (strain FGSC A4 / ATCC 38163 / CBS 112.46 / NRRL 194 / M139) (Aspergillus nidulans).